The primary structure comprises 128 residues: Small ribosomal subunit protein bS6 (128 aa).

Belongs to the bacterial ribosomal protein bS6 family.

In terms of biological role, binds together with bS18 to 16S ribosomal RNA. The chain is Small ribosomal subunit protein bS6 from Leifsonia xyli subsp. xyli (strain CTCB07).